Here is a 191-residue protein sequence, read N- to C-terminus: Vascular endothelial growth factor A (191 aa).

Positions 1–26 (MNFLLTWIHWGLAALLYFHNAKVLQA) are cleaved as a signal peptide. Disulfide bonds link cysteine 52–cysteine 94, cysteine 83–cysteine 128, and cysteine 87–cysteine 130. Asparagine 101 is a glycosylation site (N-linked (GlcNAc...) asparagine).

This sequence belongs to the PDGF/VEGF growth factor family. As to quaternary structure, homodimer; disulfide-linked. Also found as heterodimer with PGF. In terms of tissue distribution, expressed by the venom gland, and probably other tissues.

The protein resides in the secreted. Growth factor active in angiogenesis, vasculogenesis and endothelial cell growth. Induces endothelial cell proliferation, promotes cell migration, inhibits apoptosis and induces permeabilization of blood vessels. Binds to heparan sulfate and heparin. This is Vascular endothelial growth factor A from Bitis gabonica (Gaboon adder).